A 249-amino-acid polypeptide reads, in one-letter code: Methyl-coenzyme M reductase subunit gamma (249 aa).

The interval 43-62 (RAPGEEYPSVHPPLEELDEP) is disordered. Arg120 provides a ligand contact to coenzyme M.

The protein belongs to the methyl-coenzyme M reductase gamma subunit family. In terms of assembly, MCR is a hexamer of two alpha, two beta, and two gamma chains, forming a dimer of heterotrimers. The cofactor is coenzyme F430.

Its subcellular location is the cytoplasm. It carries out the reaction coenzyme B + methyl-coenzyme M = methane + coenzyme M-coenzyme B heterodisulfide. Its pathway is one-carbon metabolism; methyl-coenzyme M reduction; methane from methyl-coenzyme M: step 1/1. In terms of biological role, component of the methyl-coenzyme M reductase (MCR) I that catalyzes the reductive cleavage of methyl-coenzyme M (CoM-S-CH3 or 2-(methylthio)ethanesulfonate) using coenzyme B (CoB or 7-mercaptoheptanoylthreonine phosphate) as reductant which results in the production of methane and the mixed heterodisulfide of CoB and CoM (CoM-S-S-CoB). This is the final step in methanogenesis. The polypeptide is Methyl-coenzyme M reductase subunit gamma (mcrG) (Methanothermus fervidus).